We begin with the raw amino-acid sequence, 341 residues long: Porin-like protein L (341 aa).

A signal peptide spans 1 to 21 (MNKKLIALAVAAASISSVATA).

Belongs to the Gram-negative porin family. In terms of assembly, homotrimer.

Its subcellular location is the cell outer membrane. In terms of biological role, forms pores that allow passive diffusion of small molecules across the outer membrane. This is Porin-like protein L (ompL) from Photobacterium profundum (strain SS9).